We begin with the raw amino-acid sequence, 158 residues long: MSTAPTAPTVAELEEQERRLVFRRFTNDDAWALGSLLVELAREREAPVAIDIHRAGQQLFHAALPGSAPDNDAWIARKRRVVERYGSASYLVGSRFRAKGTTFEESSRLDPDAYAAHGGSFPVTVAGVGVVGAVTVSGLPQVEDHRLVVEALERFIGE.

It belongs to the UPF0303 family.

This chain is UPF0303 protein SCO2848, found in Streptomyces coelicolor (strain ATCC BAA-471 / A3(2) / M145).